Reading from the N-terminus, the 265-residue chain is tRNA(His) guanylyltransferase (265 aa).

Mg(2+)-binding residues include Asp-29, Gly-30, and Asp-76. Residues 29-34 (DGKGFH) and 75-76 (SD) contribute to the GTP site.

This sequence belongs to the tRNA(His) guanylyltransferase family. Requires Mg(2+) as cofactor.

The enzyme catalyses a 5'-end ribonucleotide-tRNA(His) + GTP + ATP + H2O = a 5'-end phospho-guanosine-ribonucleotide-tRNA(His) + AMP + 2 diphosphate + H(+). Its function is as follows. Adds a GMP to the 5'-end of tRNA(His) after transcription and RNase P cleavage. The polypeptide is tRNA(His) guanylyltransferase (THG1) (Debaryomyces hansenii (strain ATCC 36239 / CBS 767 / BCRC 21394 / JCM 1990 / NBRC 0083 / IGC 2968) (Yeast)).